The primary structure comprises 190 residues: MPRANEIKKGMAVNLNGKLLLVKDIDVQSPSARGASTLYKMRFTDIRSGMKVEERFKGDEIIDTISLSRRQVTFSYIDGDEYVFMDDEDYTPYNFKREQIEDELLFLPEGGIPGIQVLTMDGQILALELPQTVDMEIVETTPGIKGASASARTKPAAMSTGLIIQVPEYLSNGDKIRIHIPERRYMSRAD.

This sequence belongs to the elongation factor P family.

This chain is Elongation factor P-like protein, found in Erwinia tasmaniensis (strain DSM 17950 / CFBP 7177 / CIP 109463 / NCPPB 4357 / Et1/99).